The chain runs to 466 residues: Ribulose bisphosphate carboxylase large chain (466 aa).

Lys4 is modified (N6,N6,N6-trimethyllysine). Substrate contacts are provided by Asn113 and Thr163. Catalysis depends on Lys165, which acts as the Proton acceptor. Lys167 contacts substrate. Mg(2+)-binding residues include Lys191, Asp193, and Glu194. Lys191 is subject to N6-carboxylysine. Catalysis depends on His284, which acts as the Proton acceptor. Positions 285, 317, and 369 each coordinate substrate.

Belongs to the RuBisCO large chain family. Type I subfamily. In terms of assembly, heterohexadecamer of 8 large chains and 8 small chains; disulfide-linked. The disulfide link is formed within the large subunit homodimers. Mg(2+) is required as a cofactor. The disulfide bond which can form in the large chain dimeric partners within the hexadecamer appears to be associated with oxidative stress and protein turnover.

It is found in the plastid. The protein localises to the chloroplast. It carries out the reaction 2 (2R)-3-phosphoglycerate + 2 H(+) = D-ribulose 1,5-bisphosphate + CO2 + H2O. The enzyme catalyses D-ribulose 1,5-bisphosphate + O2 = 2-phosphoglycolate + (2R)-3-phosphoglycerate + 2 H(+). Its function is as follows. RuBisCO catalyzes two reactions: the carboxylation of D-ribulose 1,5-bisphosphate, the primary event in carbon dioxide fixation, as well as the oxidative fragmentation of the pentose substrate in the photorespiration process. Both reactions occur simultaneously and in competition at the same active site. The polypeptide is Ribulose bisphosphate carboxylase large chain (Proboscidea louisianica (Louisiana Devil's-claw)).